The primary structure comprises 558 residues: Ribonuclease Y (558 aa).

Residues 3 to 23 (VLSILLILVAVGVGIFVGRQF) form a helical membrane-spanning segment. The KH domain occupies 248–311 (TTTTVELPSN…EIAKEALQRL (64 aa)). An HD domain is found at 374–467 (VLLHSKEVAY…VCAADALSAA (94 aa)).

The protein belongs to the RNase Y family.

It localises to the cell membrane. Functionally, endoribonuclease that initiates mRNA decay. The chain is Ribonuclease Y from Aquifex aeolicus (strain VF5).